Consider the following 281-residue polypeptide: sn-glycerol-3-phosphate transport system permease protein UgpE (281 aa).

6 helical membrane-spanning segments follow: residues Ile14–Ala34, Phe85–Phe105, Phe113–Ile133, Leu142–Phe162, Ala201–Ile221, and Trp247–Leu267. The region spanning Leu77–Met268 is the ABC transmembrane type-1 domain.

This sequence belongs to the binding-protein-dependent transport system permease family. UgpAE subfamily. In terms of assembly, the complex is composed of two ATP-binding proteins (UgpC), two transmembrane proteins (UgpA and UgpE) and a solute-binding protein (UgpB).

It localises to the cell inner membrane. In terms of biological role, part of the ABC transporter complex UgpBAEC involved in sn-glycerol-3-phosphate (G3P) import. Probably responsible for the translocation of the substrate across the membrane. The sequence is that of sn-glycerol-3-phosphate transport system permease protein UgpE (ugpE) from Yersinia pestis bv. Antiqua (strain Antiqua).